Consider the following 340-residue polypeptide: Phosphoribosylformylglycinamidine cyclo-ligase (340 aa).

The protein belongs to the AIR synthase family.

It is found in the cytoplasm. The catalysed reaction is 2-formamido-N(1)-(5-O-phospho-beta-D-ribosyl)acetamidine + ATP = 5-amino-1-(5-phospho-beta-D-ribosyl)imidazole + ADP + phosphate + H(+). The protein operates within purine metabolism; IMP biosynthesis via de novo pathway; 5-amino-1-(5-phospho-D-ribosyl)imidazole from N(2)-formyl-N(1)-(5-phospho-D-ribosyl)glycinamide: step 2/2. The chain is Phosphoribosylformylglycinamidine cyclo-ligase from Streptococcus pneumoniae serotype 19F (strain G54).